Here is a 301-residue protein sequence, read N- to C-terminus: Inactive C-alpha-formylglycine-generating enzyme 2 (301 aa).

The N-terminal stretch at 1-25 (MGISLSPLLTVLSLLSGRWLELGNG) is a signal peptide. A disulfide bridge links cysteine 156 with cysteine 290. N-linked (GlcNAc...) asparagine glycosylation occurs at asparagine 191. Residues asparagine 194, leucine 195, aspartate 208, phenylalanine 210, aspartate 229, glycine 232, valine 234, and glutamate 236 each contribute to the Ca(2+) site. The span at 274–284 (RMGNTPDSASD) shows a compositional bias: polar residues. Residues 274 to 301 (RMGNTPDSASDNLGFRCASGAGRPPGEL) are disordered. The Non-canonical ER retention motif motif lies at 298–301 (PGEL).

Belongs to the sulfatase-modifying factor family. As to quaternary structure, homodimer and heterodimer with SUMF1.

It is found in the endoplasmic reticulum lumen. Lacks formylglycine generating activity and is unable to convert newly synthesized inactive sulfatases to their active form. Inhibits the activation of sulfatases by SUMF1. In Bos taurus (Bovine), this protein is Inactive C-alpha-formylglycine-generating enzyme 2.